Here is a 133-residue protein sequence, read N- to C-terminus: Putative pre-16S rRNA nuclease (133 aa).

This sequence belongs to the YqgF nuclease family.

It localises to the cytoplasm. Its function is as follows. Could be a nuclease involved in processing of the 5'-end of pre-16S rRNA. The protein is Putative pre-16S rRNA nuclease of Dehalococcoides mccartyi (strain ATCC BAA-2266 / KCTC 15142 / 195) (Dehalococcoides ethenogenes (strain 195)).